Consider the following 83-residue polypeptide: MSTIEEKVKTIISEQLGVKQEEVVNHASFVEDLGADSLDTVELVMALEEEFDTEIPDEEAEKITTVQAAIDFISNSHQQNKSN.

In terms of domain architecture, Carrier spans Ser-2 to His-77. Ser-37 is subject to O-(pantetheine 4'-phosphoryl)serine.

This sequence belongs to the acyl carrier protein (ACP) family. In terms of processing, 4'-phosphopantetheine is transferred from CoA to a specific serine of apo-ACP by AcpS. This modification is essential for activity because fatty acids are bound in thioester linkage to the sulfhydryl of the prosthetic group.

It is found in the cytoplasm. The protein operates within lipid metabolism; fatty acid biosynthesis. Carrier of the growing fatty acid chain in fatty acid biosynthesis. In Blochmanniella pennsylvanica (strain BPEN), this protein is Acyl carrier protein.